A 419-amino-acid polypeptide reads, in one-letter code: Pygopus homolog 1 (419 aa).

2 disordered regions span residues 1–64 (MPAE…PNSD) and 175–338 (HFRQ…SSSD). A compositionally biased stretch (gly residues) spans 18 to 30 (GDSGLDGLGGPGV). The short motif at 35–41 (PDKKKRK) is the Nuclear localization signal element. 2 stretches are compositionally biased toward polar residues: residues 175–221 (HFRQ…SNHS) and 240–255 (DFTQ…NSSA). Low complexity predominate over residues 276-286 (VNRNNAVNQEN). Over residues 287 to 307 (SRSSSTEATNNNPANGTQNKP) the composition is skewed to polar residues. The PHD-type zinc finger occupies 340 to 398 (VYPCGICTNEVNDDQDAILCEASCQKWFHRICTGMTETAYGLLTAEASAVWGCDTCMAD). The tract at residues 341–388 (YPCGICTNEVNDDQDAILCEASCQKWFHRICTGMTETAYGLLTAEASA) is interaction with H3K4me2. The interval 373–391 (GMTETAYGLLTAEASAVWG) is interaction with BCL9.

Interacts with BCL9 via The PHD-type zinc finger motiv, and thereby becomes part of the nuclear beta-catenin/TCF complex. Identified in a complex with BCL9L, CDC73, CTNNB1 and PYGO1. Interacts with histone H3 mono-, di- or tri-methylated at 'Lys4' (H3K4me1, H3K4me2, H3K4me3); the interaction is enhanced by the interaction with BCL9.

It localises to the nucleus. Functionally, involved in signal transduction through the Wnt pathway. The polypeptide is Pygopus homolog 1 (PYGO1) (Homo sapiens (Human)).